Reading from the N-terminus, the 175-residue chain is Transcription factor E (175 aa).

The HTH TFE/IIEalpha-type domain maps to 4–88 (AEDLFINLAK…YWKPNIDQIN (85 aa)).

Belongs to the TFE family. As to quaternary structure, monomer. Interaction with RNA polymerase subunits RpoF and RpoE is necessary for Tfe stimulatory transcription activity. Able to interact with Tbp and RNA polymerase in the absence of DNA promoter. Interacts both with the preinitiation and elongation complexes.

Functionally, transcription factor that plays a role in the activation of archaeal genes transcribed by RNA polymerase. Facilitates transcription initiation by enhancing TATA-box recognition by TATA-box-binding protein (Tbp), and transcription factor B (Tfb) and RNA polymerase recruitment. Not absolutely required for transcription in vitro, but particularly important in cases where Tbp or Tfb function is not optimal. It dynamically alters the nucleic acid-binding properties of RNA polymerases by stabilizing the initiation complex and destabilizing elongation complexes. Seems to translocate with the RNA polymerase following initiation and acts by binding to the non template strand of the transcription bubble in elongation complexes. In Saccharolobus islandicus (strain Y.N.15.51 / Yellowstone #2) (Sulfolobus islandicus), this protein is Transcription factor E.